The sequence spans 173 residues: uncharacterized protein (173 aa).

The propeptide at 1–15 (MERKLSQRAGNTFKG) is leader sequence. Phe-16 bears the N-methylphenylalanine mark. The chain crosses the membrane as a helical span at residues 16-37 (FTLVEVLITLAIISLVFSLILI).

It localises to the membrane. This is an uncharacterized protein from Aquifex aeolicus (strain VF5).